Reading from the N-terminus, the 205-residue chain is Polyamine-modulated factor 1 (205 aa).

Positions 1–28 (MAEASSVNVGSGCAEKGPEELSQEPARP) are disordered. Residues 140 to 190 (YLLQQRDALQRRVQRQEAENRQLADAVLAGRRQLEELQLQAQARQQAWQAL) adopt a coiled-coil conformation.

In terms of assembly, component of the MIS12 complex composed of MIS12, DSN1, NSL1 and PMF1. Interacts with COPS7A. Interacts via its coiled-coil domain with the leucine-zipper domain of NFE2L2. The interaction with NFE2L2 is required for the transcriptional regulation of SSAT.

It localises to the nucleus. Its subcellular location is the chromosome. The protein localises to the centromere. The protein resides in the kinetochore. Part of the MIS12 complex which is required for normal chromosome alignment and segregation and kinetochore formation during mitosis. May act as a cotranscription partner of NFE2L2 involved in regulation of polyamine-induced transcription of SSAT. The sequence is that of Polyamine-modulated factor 1 (PMF1) from Bos taurus (Bovine).